The primary structure comprises 246 residues: Probable fimbrial chaperone YadV (246 aa).

A signal peptide spans 1–25 (MFFNTKHTTALCFVTCMAFSSSSIA).

The protein belongs to the periplasmic pilus chaperone family.

The protein localises to the periplasm. Its function is as follows. Part of the yadCKLM-htrE-yadVN fimbrial operon. Could contribute to adhesion to various surfaces in specific environmental niches. This chain is Probable fimbrial chaperone YadV (yadV), found in Escherichia coli (strain K12).